A 173-amino-acid chain; its full sequence is MTYFMLFLGLCFVLGGLGVASNPSPYYGVVGLVLASVVGCGWLLSLGVSFVSLVLFMVYLGGMLVVFVYSVSLAADPFPEAWGDWRVVGYGVSFIAVLVVGVVIGGLVECWDLGVITVDSVGMFSVRLDFSGVAMFYSCGVGMFLVAGWGLLLTLFVVLELVRGLSCGAIRAV.

Helical transmembrane passes span 1–21 (MTYF…GVAS), 27–47 (YGVV…LSLG), 48–68 (VSFV…VVFV), 87–107 (VVGY…IGGL), and 139–159 (CGVG…FVVL).

The protein belongs to the complex I subunit 6 family.

It localises to the mitochondrion membrane. The catalysed reaction is a ubiquinone + NADH + 5 H(+)(in) = a ubiquinol + NAD(+) + 4 H(+)(out). Functionally, core subunit of the mitochondrial membrane respiratory chain NADH dehydrogenase (Complex I) that is believed to belong to the minimal assembly required for catalysis. Complex I functions in the transfer of electrons from NADH to the respiratory chain. The immediate electron acceptor for the enzyme is believed to be ubiquinone. This Synthliboramphus hypoleucus (Guadalupe murrelet) protein is NADH-ubiquinone oxidoreductase chain 6 (MT-ND6).